Consider the following 60-residue polypeptide: Large ribosomal subunit protein uL30 (60 aa).

This sequence belongs to the universal ribosomal protein uL30 family. In terms of assembly, part of the 50S ribosomal subunit.

The protein is Large ribosomal subunit protein uL30 of Leuconostoc mesenteroides subsp. mesenteroides (strain ATCC 8293 / DSM 20343 / BCRC 11652 / CCM 1803 / JCM 6124 / NCDO 523 / NBRC 100496 / NCIMB 8023 / NCTC 12954 / NRRL B-1118 / 37Y).